Here is a 128-residue protein sequence, read N- to C-terminus: MTNTSETTKTAIAHGNYVRGSASKVRRVLDQIRGRSYRDALIMLEFMPYRSTDPITKVLRSAVANAEHNYGMDPSTLIISSAWANNGPVMKRYRPRAQGRAFSIKKQTCHISISVESAPTQINAEVQN.

The protein belongs to the universal ribosomal protein uL22 family. In terms of assembly, part of the 50S ribosomal subunit.

Functionally, this protein binds specifically to 23S rRNA; its binding is stimulated by other ribosomal proteins, e.g. L4, L17, and L20. It is important during the early stages of 50S assembly. It makes multiple contacts with different domains of the 23S rRNA in the assembled 50S subunit and ribosome. Its function is as follows. The globular domain of the protein is located near the polypeptide exit tunnel on the outside of the subunit, while an extended beta-hairpin is found that lines the wall of the exit tunnel in the center of the 70S ribosome. In Prochlorococcus marinus (strain MIT 9312), this protein is Large ribosomal subunit protein uL22.